Here is a 121-residue protein sequence, read N- to C-terminus: Large ribosomal subunit protein uL14c (121 aa).

The protein belongs to the universal ribosomal protein uL14 family. As to quaternary structure, part of the 50S ribosomal subunit.

The protein localises to the plastid. The protein resides in the organellar chromatophore. Its function is as follows. Binds to 23S rRNA. The polypeptide is Large ribosomal subunit protein uL14c (Paulinella chromatophora).